A 331-amino-acid chain; its full sequence is 3'-5' exonuclease (331 aa).

Residues 27–92 (ERVKQTNAAK…EDGPASPEKE (66 aa)) form a disordered region. Polar residues predominate over residues 31-43 (QTNAAKKQIATNN). Residues 47–67 (KNQDTPEMIKDKENAESENPP) show a composition bias toward basic and acidic residues. Phosphoserine occurs at positions 80 and 88. Residues 118–290 (SADEVMQWVE…IGQVIYREIE (173 aa)) enclose the 3'-5' exonuclease domain. Residues aspartate 140, glutamate 142, and aspartate 278 each contribute to the Mg(2+) site.

It belongs to the WRNexo family.

The protein resides in the nucleus. Functionally, has exonuclease activity on both single-stranded and duplex templates bearing overhangs, but not blunt ended duplex DNA, and cleaves in a 3'-5' direction. Essential for the formation of DNA replication focal centers. Has an important role in maintaining genome stability. The protein is 3'-5' exonuclease of Drosophila grimshawi (Hawaiian fruit fly).